The chain runs to 296 residues: 3-methyl-2-oxobutanoate hydroxymethyltransferase (296 aa).

A compositionally biased stretch (low complexity) spans 1–14; sequence MTAPTPTPANAATP. Positions 1–29 are disordered; it reads MTAPTPTPANAATPYGTLPPASPLPQRRP. 2 residues coordinate Mg(2+): Asp71 and Asp114. Residues 71-72, Asp114, and Lys143 each bind 3-methyl-2-oxobutanoate; that span reads DS. Glu145 provides a ligand contact to Mg(2+). Glu212 acts as the Proton acceptor in catalysis.

This sequence belongs to the PanB family. Homodecamer; pentamer of dimers. Mg(2+) serves as cofactor.

The protein resides in the cytoplasm. The catalysed reaction is 3-methyl-2-oxobutanoate + (6R)-5,10-methylene-5,6,7,8-tetrahydrofolate + H2O = 2-dehydropantoate + (6S)-5,6,7,8-tetrahydrofolate. It participates in cofactor biosynthesis; (R)-pantothenate biosynthesis; (R)-pantoate from 3-methyl-2-oxobutanoate: step 1/2. Functionally, catalyzes the reversible reaction in which hydroxymethyl group from 5,10-methylenetetrahydrofolate is transferred onto alpha-ketoisovalerate to form ketopantoate. The chain is 3-methyl-2-oxobutanoate hydroxymethyltransferase from Paracidovorax citrulli (strain AAC00-1) (Acidovorax citrulli).